The primary structure comprises 78 residues: UPF0270 protein PC1_3850 (78 aa).

Belongs to the UPF0270 family.

The chain is UPF0270 protein PC1_3850 from Pectobacterium carotovorum subsp. carotovorum (strain PC1).